A 246-amino-acid chain; its full sequence is MNAFLHAISFFTRIPVPWLRPSEEAWRKSVNWYPAVGLVIGLLLWGVHQAGLVLFSPWIAAILTLIAWVYVTGGLHMDGWMDLADGLGSSRPREQILAIMKDSRVGAMGVLAAIMLLLIKAGAVAELAHPGWGSFLIVAPVAARTHVLLSIKLWPYLSADKGIGKGISSGLSVSSIIVSYIIVFAAGWYLGGLQVMTAIFLSLLFALWFSRSVAKKLGGLNGDCYGAVIESSEAVVLLVLVGSWWL.

A run of 7 helical transmembrane segments spans residues 30–50 (VNWYPAVGLVIGLLLWGVHQA), 51–71 (GLVLFSPWIAAILTLIAWVYV), 105–125 (VGAMGVLAAIMLLLIKAGAVA), 131–151 (GWGSFLIVAPVAARTHVLLSI), 167–189 (ISSGLSVSSIIVSYIIVFAAGWY), 193–210 (LQVMTAIFLSLLFALWFS), and 226–246 (GAVIESSEAVVLLVLVGSWWL).

Belongs to the CobS family. Requires Mg(2+) as cofactor.

It is found in the cell membrane. It carries out the reaction alpha-ribazole + adenosylcob(III)inamide-GDP = adenosylcob(III)alamin + GMP + H(+). The enzyme catalyses alpha-ribazole 5'-phosphate + adenosylcob(III)inamide-GDP = adenosylcob(III)alamin 5'-phosphate + GMP + H(+). It functions in the pathway cofactor biosynthesis; adenosylcobalamin biosynthesis; adenosylcobalamin from cob(II)yrinate a,c-diamide: step 7/7. Its function is as follows. Joins adenosylcobinamide-GDP and alpha-ribazole to generate adenosylcobalamin (Ado-cobalamin). Also synthesizes adenosylcobalamin 5'-phosphate from adenosylcobinamide-GDP and alpha-ribazole 5'-phosphate. This chain is Adenosylcobinamide-GDP ribazoletransferase, found in Brevibacillus brevis (strain 47 / JCM 6285 / NBRC 100599).